We begin with the raw amino-acid sequence, 723 residues long: Preterminal protein (723 aa).

The Nuclear localization signal signature appears at 453–462; sequence RLPMRRRRRR. The segment at 457–492 is disordered; the sequence is RRRRRRAPPPPPMSEELSEPEVEAFPPASPPRRSFE. S651 is subject to O-(5'-phospho-DNA)-serine.

The protein belongs to the adenoviridae terminal protein family. As to quaternary structure, heterodimer with the polymerase; this heterodimer binds to bp 9 to 18 of the genome. Interacts with host POU2F1; POU2F1 binds to the auxiliary sequences in the inverted terminal repeats and tethers the pTP-POL heterodimer to the origin DNA thereby participating in the assembly of the pre-initiation complex (POL-TP-DBP-NFIA-POU2F1). Post-translationally, preterminal protein is used to replicate viral genome, upon genomic encapsidation it is processed first into iTP and finally into TP by adenovirus protease.

It is found in the host nucleus matrix. Protein covalently bound to the viral DNA that acts as a primer for viral genomic replication by DNA strand displacement. Assembles on the viral origin of replication in an initiation complex with viral polymerase, DBP, host NFIA and host POU2F1/OCT1. During initiation, the polymerase covalently couples the first dCTP with Ser-580 of pTP. The terminal protein stimulates the template activity over 20 fold compared to protein-free templates. Neo-synthesized viral genomes are linked to two preterminal proteins, one for each 5' end. These new genomes are encapsidated in the nucleus, and during capsid maturation by viral protease, preterminal protein is first cleaved into intermediary (iTP), then into mature TP. May play a role in host nuclear matrix localization of genomic DNA. This chain is Preterminal protein, found in Canis lupus familiaris (Dog).